The sequence spans 251 residues: Large ribosomal subunit protein uL16m (251 aa).

The transit peptide at 1-29 directs the protein to the mitochondrion; it reads MWRLLARASAPLLRVPLSDSWALLPASAG.

This sequence belongs to the universal ribosomal protein uL16 family. As to quaternary structure, component of the mitochondrial large ribosomal subunit (mt-LSU). Mature mammalian 55S mitochondrial ribosomes consist of a small (28S) and a large (39S) subunit. The 28S small subunit contains a 12S ribosomal RNA (12S mt-rRNA) and 30 different proteins. The 39S large subunit contains a 16S rRNA (16S mt-rRNA), a copy of mitochondrial valine transfer RNA (mt-tRNA(Val)), which plays an integral structural role, and 52 different proteins.

It is found in the mitochondrion. The sequence is that of Large ribosomal subunit protein uL16m (MRPL16) from Homo sapiens (Human).